The sequence spans 353 residues: tRNA N6-adenosine threonylcarbamoyltransferase (353 aa).

Positions 111 and 115 each coordinate Fe cation. Substrate contacts are provided by residues 148–152, Asp-181, Gly-194, and Asn-286; that span reads LVSGG. Asp-314 is a Fe cation binding site.

The protein belongs to the KAE1 / TsaD family. It depends on Fe(2+) as a cofactor.

The protein localises to the cytoplasm. The catalysed reaction is L-threonylcarbamoyladenylate + adenosine(37) in tRNA = N(6)-L-threonylcarbamoyladenosine(37) in tRNA + AMP + H(+). Required for the formation of a threonylcarbamoyl group on adenosine at position 37 (t(6)A37) in tRNAs that read codons beginning with adenine. Is involved in the transfer of the threonylcarbamoyl moiety of threonylcarbamoyl-AMP (TC-AMP) to the N6 group of A37, together with TsaE and TsaB. TsaD likely plays a direct catalytic role in this reaction. This is tRNA N6-adenosine threonylcarbamoyltransferase from Blochmanniella floridana.